We begin with the raw amino-acid sequence, 423 residues long: SH2 domain-containing protein 5 (423 aa).

Residues 28–146 enclose the PID domain; the sequence is AQYVGLLPCG…LLCRSFQLAY (119 aa). An SH2 domain is found at 296 to 392; the sequence is WAFAGISRPC…LDMGRLNPTY (97 aa). The interval 394–423 is disordered; that stretch reads EQDCGPLGRPPRTLRPLSHAKSEAELQGLG. Over residues 398 to 410 the composition is skewed to low complexity; sequence GPLGRPPRTLRPL.

Interacts with BCR.

It localises to the postsynaptic density. Its function is as follows. May be involved in synaptic plasticity regulation through the control of Rac-GTP levels. This is SH2 domain-containing protein 5 from Pongo abelii (Sumatran orangutan).